The following is a 716-amino-acid chain: Eosinophil peroxidase (716 aa).

An N-terminal signal peptide occupies residues 1-18; sequence MMQQLLALVGALATLILT. Residues 19-140 constitute a propeptide that is removed on maturation; that stretch reads QHAEGTAPAS…SGCALQDQAE (122 aa). Residues asparagine 53 and asparagine 114 are each glycosylated (N-linked (GlcNAc...) asparagine). Cysteine 142 and cysteine 153 are oxidised to a cystine. Position 233 (aspartate 233) interacts with heme b. The active-site Proton acceptor is the histidine 234. Residue aspartate 235 coordinates Ca(2+). 2 cysteine pairs are disulfide-bonded: cysteine 254–cysteine 264 and cysteine 258–cysteine 282. The Ca(2+) site is built by threonine 307, phenylalanine 309, aspartate 311, and serine 313. 2 N-linked (GlcNAc...) asparagine glycosylation sites follow: asparagine 328 and asparagine 364. An intrachain disulfide couples cysteine 360 to cysteine 371. Residues glutamate 381 and histidine 475 each contribute to the heme b site. The residue at position 489 (tyrosine 489) is a 3'-nitrotyrosine. Cystine bridges form between cysteine 579-cysteine 636 and cysteine 677-cysteine 702. Residue asparagine 709 is glycosylated (N-linked (GlcNAc...) asparagine).

This sequence belongs to the peroxidase family. XPO subfamily. In terms of assembly, tetramer of two light chains and two heavy chains. It depends on Ca(2+) as a cofactor. The cofactor is heme b.

Its subcellular location is the cytoplasmic granule. It catalyses the reaction 2 a phenolic donor + H2O2 = 2 a phenolic radical donor + 2 H2O. In terms of biological role, mediates tyrosine nitration of secondary granule proteins in mature resting eosinophils. In Mus musculus (Mouse), this protein is Eosinophil peroxidase (Epx).